Consider the following 599-residue polypeptide: 1-deoxy-D-xylulose-5-phosphate synthase (599 aa).

Thiamine diphosphate is bound by residues His-63 and Gly-104–Ser-106. Residue Asp-135 participates in Mg(2+) binding. Thiamine diphosphate-binding positions include Gly-136–Ala-137, Asn-164, Tyr-271, and Glu-352. A Mg(2+)-binding site is contributed by Asn-164.

The protein belongs to the transketolase family. DXPS subfamily. Homodimer. It depends on Mg(2+) as a cofactor. Thiamine diphosphate is required as a cofactor.

The enzyme catalyses D-glyceraldehyde 3-phosphate + pyruvate + H(+) = 1-deoxy-D-xylulose 5-phosphate + CO2. The protein operates within metabolic intermediate biosynthesis; 1-deoxy-D-xylulose 5-phosphate biosynthesis; 1-deoxy-D-xylulose 5-phosphate from D-glyceraldehyde 3-phosphate and pyruvate: step 1/1. In terms of biological role, catalyzes the acyloin condensation reaction between C atoms 2 and 3 of pyruvate and glyceraldehyde 3-phosphate to yield 1-deoxy-D-xylulose-5-phosphate (DXP). The polypeptide is 1-deoxy-D-xylulose-5-phosphate synthase (Nitratiruptor sp. (strain SB155-2)).